Reading from the N-terminus, the 41-residue chain is Conotoxin Ac4.2 (41 aa).

The propeptide occupies Phe1–Arg11. Pro13 is subject to 4-hydroxyproline. 2 O-linked (HexNAc...) threonine glycosylation sites follow: Thr18 and Thr20. 2 positions are modified to 4-hydroxyproline: Pro29 and Pro33. Cys40 is modified (cysteine amide).

It belongs to the conotoxin A superfamily. Post-translationally, contains 3 disulfide bonds. Expressed by the venom duct.

Its subcellular location is the secreted. Its function is as follows. Probable neurotoxin with ion channel inhibitor activity. This Conus achatinus (Little frog cone) protein is Conotoxin Ac4.2.